Reading from the N-terminus, the 137-residue chain is Large ribosomal subunit protein uL16 (137 aa).

The protein belongs to the universal ribosomal protein uL16 family. As to quaternary structure, part of the 50S ribosomal subunit.

Binds 23S rRNA and is also seen to make contacts with the A and possibly P site tRNAs. The sequence is that of Large ribosomal subunit protein uL16 from Alcanivorax borkumensis (strain ATCC 700651 / DSM 11573 / NCIMB 13689 / SK2).